Consider the following 445-residue polypeptide: Membrane protein insertase YidC (445 aa).

The next 5 membrane-spanning stretches (helical) occupy residues 6 to 26 (VVAI…PIKV), 248 to 268 (FGWA…PLYH), 313 to 333 (ASGC…WSVI), 352 to 372 (LSAG…VASY), and 388 to 408 (GIIM…GLFL).

Belongs to the OXA1/ALB3/YidC family. Type 1 subfamily. In terms of assembly, interacts with the Sec translocase complex via SecD. Specifically interacts with transmembrane segments of nascent integral membrane proteins during membrane integration.

Its subcellular location is the cell inner membrane. Functionally, required for the insertion and/or proper folding and/or complex formation of integral membrane proteins into the membrane. Involved in integration of membrane proteins that insert both dependently and independently of the Sec translocase complex, as well as at least some lipoproteins. Aids folding of multispanning membrane proteins. The chain is Membrane protein insertase YidC from Thermotoga maritima (strain ATCC 43589 / DSM 3109 / JCM 10099 / NBRC 100826 / MSB8).